We begin with the raw amino-acid sequence, 241 residues long: DNA repair protein RecO (241 aa).

Belongs to the RecO family.

Functionally, involved in DNA repair and RecF pathway recombination. The polypeptide is DNA repair protein RecO (Vibrio cholerae serotype O1 (strain ATCC 39541 / Classical Ogawa 395 / O395)).